The sequence spans 397 residues: CCA-adding enzyme (397 aa).

Glycine 26 and arginine 29 together coordinate ATP. The CTP site is built by glycine 26 and arginine 29. Mg(2+) is bound by residues aspartate 39 and aspartate 41. ATP-binding residues include arginine 110, aspartate 153, arginine 156, arginine 159, and arginine 162. CTP-binding residues include arginine 110, aspartate 153, arginine 156, arginine 159, and arginine 162.

Belongs to the tRNA nucleotidyltransferase/poly(A) polymerase family. Bacterial CCA-adding enzyme type 3 subfamily. Homodimer. It depends on Mg(2+) as a cofactor.

The catalysed reaction is a tRNA precursor + 2 CTP + ATP = a tRNA with a 3' CCA end + 3 diphosphate. The enzyme catalyses a tRNA with a 3' CCA end + 2 CTP + ATP = a tRNA with a 3' CCACCA end + 3 diphosphate. In terms of biological role, catalyzes the addition and repair of the essential 3'-terminal CCA sequence in tRNAs without using a nucleic acid template. Adds these three nucleotides in the order of C, C, and A to the tRNA nucleotide-73, using CTP and ATP as substrates and producing inorganic pyrophosphate. tRNA 3'-terminal CCA addition is required both for tRNA processing and repair. Also involved in tRNA surveillance by mediating tandem CCA addition to generate a CCACCA at the 3' terminus of unstable tRNAs. While stable tRNAs receive only 3'-terminal CCA, unstable tRNAs are marked with CCACCA and rapidly degraded. This is CCA-adding enzyme from Bacillus thuringiensis subsp. konkukian (strain 97-27).